We begin with the raw amino-acid sequence, 139 residues long: Putative pre-16S rRNA nuclease (139 aa).

This sequence belongs to the YqgF nuclease family.

The protein resides in the cytoplasm. In terms of biological role, could be a nuclease involved in processing of the 5'-end of pre-16S rRNA. In Streptococcus pyogenes serotype M2 (strain MGAS10270), this protein is Putative pre-16S rRNA nuclease.